The following is a 20-amino-acid chain: Alkaline phosphatase (20 aa).

As to expression, expressed by the venom gland.

It is found in the secreted. It catalyses the reaction a phosphate monoester + H2O = an alcohol + phosphate. Its function is as follows. Has hemorrhagic activity. The polypeptide is Alkaline phosphatase (Deinagkistrodon acutus (Hundred-pace snake)).